The sequence spans 157 residues: UPF0587 protein C2D10.03c (157 aa).

Residues Cys34, Cys37, Cys68, and Cys71 each coordinate Zn(2+).

The protein belongs to the UPF0587 family.

The sequence is that of UPF0587 protein C2D10.03c from Schizosaccharomyces pombe (strain 972 / ATCC 24843) (Fission yeast).